A 286-amino-acid chain; its full sequence is tRNA uridine(34) hydroxylase (286 aa).

The region spanning 130–225 (RGDDVVFFDG…YGETFGDRGL (96 aa)) is the Rhodanese domain. C185 functions as the Cysteine persulfide intermediate in the catalytic mechanism.

It belongs to the TrhO family.

The catalysed reaction is uridine(34) in tRNA + AH2 + O2 = 5-hydroxyuridine(34) in tRNA + A + H2O. Its function is as follows. Catalyzes oxygen-dependent 5-hydroxyuridine (ho5U) modification at position 34 in tRNAs. The chain is tRNA uridine(34) hydroxylase from Rhodococcus erythropolis (strain PR4 / NBRC 100887).